We begin with the raw amino-acid sequence, 508 residues long: MIAVLFSFVIAGCIYYIVSRRVRRSRLPPGPPGIPIPFIGNMFDMPEESPWLTFLQWGRDYNTDILYVDAGGTEMVILNTLETITDLLEKRGSIYSGRLESTMVNELMGWEFDLGFITYGDRWREERRMFAKEFSEKGIKQFRHAQVKAAHQLVQQLTKTPDRWAQHIRHQIAAMSLDIGYGIDLAEDDPWLEATHLANEGLAIASVPGKFWVDSFPSLKYLPAWFPGAVFKRKAKVWREAADHMVDMPYETMRKLAPQGLTRPSYASARLQAMDLNGDLEHQEHVIKNTAAEVNVGGGDTTVSAMSAFILAMVKYPEVQRKVQAELDALTNNGQIPDYDEEDDSLPYLTACIKELFRWNQIAPLAIPHKLMKDDVYRGYLIPKNTLVFANTWAVLNDPEVYPDPSVFRPERYLGPDGKPDNTVRDPRKAAFGYGRRNCPGIHLAQSTVWIAGATLLSAFNIERPVDQNGKPIDIPADFTTGFFRHPVPFQCRFVPRTEQVSQSVSGP.

A signal peptide spans 1–19; the sequence is MIAVLFSFVIAGCIYYIVS. Cys-439 is a binding site for heme.

Belongs to the cytochrome P450 family. The cofactor is heme.

It catalyses the reaction tryptamine + AH2 + O2 = 4-hydroxytryptamine + A + H2O. It functions in the pathway secondary metabolite biosynthesis. Cytochrome P450 monooxygenase; part of the gene cluster that mediates the biosynthesis of psilocybin, a psychotropic tryptamine-derived natural product. The first step in the pathway is the decarboxylation of L-tryptophan to tryptamine by the decarboxylase psiD. 4-hydroxy-L-tryptophan is accepted as substrate by psiD as well. The cytochrome P450 monooxygenase psiH then converts tryptamine to 4-hydroxytryptamine. The kinase psiK catalyzes the 4-O-phosphorylation step by converting 4-hydroxytryptamine into norbaeocystin. The methyltransferase psiM then catalyzes iterative methyl transfer to the amino group of norbaeocystin to yield psilocybin via a monomethylated intermediate, baeocystin. The chain is Tryptamine 4-monooxygenase from Psilocybe cubensis (Psychedelic mushroom).